A 466-amino-acid polypeptide reads, in one-letter code: Glycosyl hydrolase family 109 protein (466 aa).

Positions 1–30 (MENTRRSFLKKVSAAGIGAAGLAMAGNAGA) form a signal peptide, tat-type signal. NAD(+)-binding positions include 59-60 (SR), Asp81, 130-133 (WEWH), 151-152 (EV), and Asn180. Tyr209 is a substrate binding site. 241 to 245 (AEAQW) contacts NAD(+). Substrate contacts are provided by residues Arg246, 258–261 (YPTH), and Tyr340. Residue Tyr258 participates in NAD(+) binding.

Belongs to the Gfo/Idh/MocA family. Glycosyl hydrolase 109 subfamily. Requires NAD(+) as cofactor. Post-translationally, predicted to be exported by the Tat system. The position of the signal peptide cleavage has not been experimentally proven.

Its function is as follows. Glycosidase. The protein is Glycosyl hydrolase family 109 protein of Parabacteroides distasonis (strain ATCC 8503 / DSM 20701 / CIP 104284 / JCM 5825 / NCTC 11152).